The following is a 374-amino-acid chain: Chaperone protein DnaJ (374 aa).

Residues 4–69 (SYYEILEITQ…EKRAIYDRYG (66 aa)) enclose the J domain. The segment at 136–213 (GCKKNIDFTY…CKGLGYNESK (78 aa)) adopts a CR-type zinc-finger fold. Positions 149, 152, 165, 168, 187, 190, 201, and 204 each coordinate Zn(2+). 4 CXXCXGXG motif repeats span residues 149-156 (CKTCNGTG), 165-172 (CPKCQGRG), 187-194 (CPDCQGSG), and 201-208 (CNDCKGLG).

Belongs to the DnaJ family. Homodimer. Requires Zn(2+) as cofactor.

It localises to the cytoplasm. Participates actively in the response to hyperosmotic and heat shock by preventing the aggregation of stress-denatured proteins and by disaggregating proteins, also in an autonomous, DnaK-independent fashion. Unfolded proteins bind initially to DnaJ; upon interaction with the DnaJ-bound protein, DnaK hydrolyzes its bound ATP, resulting in the formation of a stable complex. GrpE releases ADP from DnaK; ATP binding to DnaK triggers the release of the substrate protein, thus completing the reaction cycle. Several rounds of ATP-dependent interactions between DnaJ, DnaK and GrpE are required for fully efficient folding. Also involved, together with DnaK and GrpE, in the DNA replication of plasmids through activation of initiation proteins. In Campylobacter jejuni subsp. doylei (strain ATCC BAA-1458 / RM4099 / 269.97), this protein is Chaperone protein DnaJ.